We begin with the raw amino-acid sequence, 310 residues long: tRNA dimethylallyltransferase (310 aa).

14–21 serves as a coordination point for ATP; it reads GPTASGKT. 16–21 serves as a coordination point for substrate; it reads TASGKT. Interaction with substrate tRNA regions lie at residues 39 to 42, 163 to 167, and 244 to 249; these read DSAL, QRLSR, and RCVGYR.

This sequence belongs to the IPP transferase family. Monomer. Mg(2+) is required as a cofactor.

The enzyme catalyses adenosine(37) in tRNA + dimethylallyl diphosphate = N(6)-dimethylallyladenosine(37) in tRNA + diphosphate. Its function is as follows. Catalyzes the transfer of a dimethylallyl group onto the adenine at position 37 in tRNAs that read codons beginning with uridine, leading to the formation of N6-(dimethylallyl)adenosine (i(6)A). The chain is tRNA dimethylallyltransferase from Tolumonas auensis (strain DSM 9187 / NBRC 110442 / TA 4).